The primary structure comprises 95 residues: Large ribosomal subunit protein bL27 (95 aa).

A propeptide spanning residues 1-6 (MFLQLF) is cleaved from the precursor.

The protein belongs to the bacterial ribosomal protein bL27 family. Post-translationally, the N-terminus is cleaved by ribosomal processing cysteine protease Prp.

The polypeptide is Large ribosomal subunit protein bL27 (Symbiobacterium thermophilum (strain DSM 24528 / JCM 14929 / IAM 14863 / T)).